The following is a 331-amino-acid chain: Olfactory receptor 6B3 (331 aa).

At 1 to 25 the chain is on the extracellular side; sequence MSGENVTRVGTFILVGFPTAPGLQY. N5 carries N-linked (GlcNAc...) asparagine glycosylation. The helical transmembrane segment at 26-46 threads the bilayer; that stretch reads LLFLLFLLTYLFVLVENLAII. Residues 47–54 are Cytoplasmic-facing; it reads LTVWSSTS. Residues 55-75 form a helical membrane-spanning segment; sequence LHRPMYYFLSSMSFLEIWYVS. At 76-99 the chain is on the extracellular side; that stretch reads DITPKMLEGFLLQQKRISFVGCMT. C97 and C189 are disulfide-bonded. A helical membrane pass occupies residues 100 to 120; it reads QLYFFSSLVCTECVLLASMAY. The Cytoplasmic portion of the chain corresponds to 121–139; sequence DRYVAICHPLRYHVLVTPG. A helical membrane pass occupies residues 140 to 160; that stretch reads LCLQLVGFSFVSGFTISMIKV. Residues 161–196 are Extracellular-facing; the sequence is CFISSVTFCGSNVLNHFFCDISPILKLACTDFSTAE. The helical transmembrane segment at 197 to 217 threads the bilayer; the sequence is LVDFILAFIILVFPLLATMLS. The Cytoplasmic portion of the chain corresponds to 218–237; the sequence is YAHITLAVLRIPSATGCWRA. A helical membrane pass occupies residues 238-258; the sequence is FFTCASHLTVVTVFYTALLFM. Over 259 to 271 the chain is Extracellular; the sequence is YVRPQAIDSRSSN. Residues 272-292 form a helical membrane-spanning segment; the sequence is KLISVLYTVITPILNPLIYCL. The Cytoplasmic segment spans residues 293–331; that stretch reads RNKEFKNALKKAFGLTSCAVEGRLSSLLELHLQIHSQPL.

It belongs to the G-protein coupled receptor 1 family.

The protein localises to the cell membrane. Odorant receptor. This Homo sapiens (Human) protein is Olfactory receptor 6B3 (OR6B3).